The sequence spans 431 residues: UDP-N-acetylglucosamine 1-carboxyvinyltransferase (431 aa).

A phosphoenolpyruvate-binding site is contributed by 22–23 (KN). Residue Arg-102 coordinates UDP-N-acetyl-alpha-D-glucosamine. Cys-126 (proton donor) is an active-site residue. Cys-126 is subject to 2-(S-cysteinyl)pyruvic acid O-phosphothioketal. Residues 131-135 (RPVDL), Asp-316, and Ile-338 each bind UDP-N-acetyl-alpha-D-glucosamine.

The protein belongs to the EPSP synthase family. MurA subfamily.

It is found in the cytoplasm. It carries out the reaction phosphoenolpyruvate + UDP-N-acetyl-alpha-D-glucosamine = UDP-N-acetyl-3-O-(1-carboxyvinyl)-alpha-D-glucosamine + phosphate. It participates in cell wall biogenesis; peptidoglycan biosynthesis. In terms of biological role, cell wall formation. Adds enolpyruvyl to UDP-N-acetylglucosamine. This chain is UDP-N-acetylglucosamine 1-carboxyvinyltransferase, found in Beijerinckia indica subsp. indica (strain ATCC 9039 / DSM 1715 / NCIMB 8712).